We begin with the raw amino-acid sequence, 163 residues long: NADH-quinone oxidoreductase subunit I (163 aa).

2 4Fe-4S ferredoxin-type domains span residues 55-84 (RRYE…IESE) and 94-123 (TQYD…ETRV). 8 residues coordinate [4Fe-4S] cluster: C64, C67, C70, C74, C103, C106, C109, and C113.

The protein belongs to the complex I 23 kDa subunit family. NDH-1 is composed of 14 different subunits. Subunits NuoA, H, J, K, L, M, N constitute the membrane sector of the complex. [4Fe-4S] cluster is required as a cofactor.

It is found in the cell inner membrane. It carries out the reaction a quinone + NADH + 5 H(+)(in) = a quinol + NAD(+) + 4 H(+)(out). NDH-1 shuttles electrons from NADH, via FMN and iron-sulfur (Fe-S) centers, to quinones in the respiratory chain. The immediate electron acceptor for the enzyme in this species is believed to be ubiquinone. Couples the redox reaction to proton translocation (for every two electrons transferred, four hydrogen ions are translocated across the cytoplasmic membrane), and thus conserves the redox energy in a proton gradient. The chain is NADH-quinone oxidoreductase subunit I from Hydrogenovibrio crunogenus (strain DSM 25203 / XCL-2) (Thiomicrospira crunogena).